A 294-amino-acid chain; its full sequence is MINKIFALPVIEQLTPVLSRRQLDDLDLIVVDHPQVKASFALQGAHLLSWKPVGEEEVLWLSNNTPFKTGVALRGGVPICWPWFGPAAQQGLPSHGFARNLPWALKAHNEDDNGVMLTFELQSSEATRKYWPHDFTLLARFKVGKTCEIELEAHGEFATTSALHSYFNVGDIANVKVSGLGDRFIDKVNDAKEGVLTDGIQTFPDRTDRVYLNPEACSVIHDATLNRTIDVVHHHHLNVVGWNPGPALSVSMGDMPDDGYKTFVCVETVYATAPQQATEEKPSRLAQTICVAKR.

Residues Arg74 and Arg99 each coordinate substrate. His164 is an active-site residue. Asp208 lines the substrate pocket. Glu267 is a catalytic residue.

Belongs to the glucose-6-phosphate 1-epimerase family. As to quaternary structure, monomer in solution.

It carries out the reaction alpha-D-glucose 6-phosphate = beta-D-glucose 6-phosphate. Functionally, probably functions as a hexose-6-phosphate 1-epimerase. The sequence is that of Putative glucose-6-phosphate 1-epimerase from Salmonella typhimurium (strain LT2 / SGSC1412 / ATCC 700720).